The following is a 166-amino-acid chain: 6,7-dimethyl-8-ribityllumazine synthase (166 aa).

Residues W31, 63 to 65 (SFE), and 85 to 87 (VII) contribute to the 5-amino-6-(D-ribitylamino)uracil site. Position 90-91 (90-91 (GT)) interacts with (2S)-2-hydroxy-3-oxobutyl phosphate. H93 (proton donor) is an active-site residue. F118 is a binding site for 5-amino-6-(D-ribitylamino)uracil. R132 contributes to the (2S)-2-hydroxy-3-oxobutyl phosphate binding site.

Belongs to the DMRL synthase family.

It catalyses the reaction (2S)-2-hydroxy-3-oxobutyl phosphate + 5-amino-6-(D-ribitylamino)uracil = 6,7-dimethyl-8-(1-D-ribityl)lumazine + phosphate + 2 H2O + H(+). Its pathway is cofactor biosynthesis; riboflavin biosynthesis; riboflavin from 2-hydroxy-3-oxobutyl phosphate and 5-amino-6-(D-ribitylamino)uracil: step 1/2. Its function is as follows. Catalyzes the formation of 6,7-dimethyl-8-ribityllumazine by condensation of 5-amino-6-(D-ribitylamino)uracil with 3,4-dihydroxy-2-butanone 4-phosphate. This is the penultimate step in the biosynthesis of riboflavin. The chain is 6,7-dimethyl-8-ribityllumazine synthase from Cutibacterium acnes (strain DSM 16379 / KPA171202) (Propionibacterium acnes).